Consider the following 240-residue polypeptide: Phosphoribosylaminoimidazole-succinocarboxamide synthase (240 aa).

Belongs to the SAICAR synthetase family.

The catalysed reaction is 5-amino-1-(5-phospho-D-ribosyl)imidazole-4-carboxylate + L-aspartate + ATP = (2S)-2-[5-amino-1-(5-phospho-beta-D-ribosyl)imidazole-4-carboxamido]succinate + ADP + phosphate + 2 H(+). The protein operates within purine metabolism; IMP biosynthesis via de novo pathway; 5-amino-1-(5-phospho-D-ribosyl)imidazole-4-carboxamide from 5-amino-1-(5-phospho-D-ribosyl)imidazole-4-carboxylate: step 1/2. This chain is Phosphoribosylaminoimidazole-succinocarboxamide synthase, found in Coxiella burnetii (strain RSA 493 / Nine Mile phase I).